Consider the following 471-residue polypeptide: Glutamate--tRNA ligase (471 aa).

Positions 9 to 19 (PSPTGYLHVGG) match the 'HIGH' region motif. The short motif at 237-241 (KLSKR) is the 'KMSKS' region element. K240 is a binding site for ATP.

It belongs to the class-I aminoacyl-tRNA synthetase family. Glutamate--tRNA ligase type 1 subfamily. In terms of assembly, monomer.

The protein localises to the cytoplasm. It carries out the reaction tRNA(Glu) + L-glutamate + ATP = L-glutamyl-tRNA(Glu) + AMP + diphosphate. Catalyzes the attachment of glutamate to tRNA(Glu) in a two-step reaction: glutamate is first activated by ATP to form Glu-AMP and then transferred to the acceptor end of tRNA(Glu). The chain is Glutamate--tRNA ligase from Pectobacterium atrosepticum (strain SCRI 1043 / ATCC BAA-672) (Erwinia carotovora subsp. atroseptica).